The sequence spans 41 residues: Competence-stimulating peptide type 2 (41 aa).

The propeptide occupies 1 to 24 (MKNTVKLEQFVALKEKDLQKIKGG).

The protein belongs to the ComC family.

It is found in the secreted. Functionally, acts as a pheromone, induces cells to develop competence for genetic transformation. This chain is Competence-stimulating peptide type 2 (comC2), found in Streptococcus pneumoniae serotype 4 (strain ATCC BAA-334 / TIGR4).